The chain runs to 50 residues: Photosystem II reaction center protein M (50 aa).

Residues G7–I27 traverse the membrane as a helical segment.

The protein belongs to the PsbM family. As to quaternary structure, PSII is composed of 1 copy each of membrane proteins PsbA, PsbB, PsbC, PsbD, PsbE, PsbF, PsbH, PsbI, PsbJ, PsbK, PsbL, PsbM, PsbT, PsbX, PsbY, Psb30/Ycf12, peripheral proteins PsbO, CyanoQ (PsbQ), PsbU, PsbV and a large number of cofactors. It forms dimeric complexes.

It localises to the cellular thylakoid membrane. Functionally, one of the components of the core complex of photosystem II (PSII). PSII is a light-driven water:plastoquinone oxidoreductase that uses light energy to abstract electrons from H(2)O, generating O(2) and a proton gradient subsequently used for ATP formation. It consists of a core antenna complex that captures photons, and an electron transfer chain that converts photonic excitation into a charge separation. This subunit is found at the monomer-monomer interface. The sequence is that of Photosystem II reaction center protein M from Prochlorococcus marinus subsp. pastoris (strain CCMP1986 / NIES-2087 / MED4).